The chain runs to 79 residues: Sec-independent protein translocase protein TatA (79 aa).

The chain crosses the membrane as a helical span at residues 1–21 (MGSLSIWHWIVVIAVVLLLFG). A compositionally biased stretch (basic and acidic residues) spans 42 to 60 (GLQDDEKTAEKPDAVKSLD). The tract at residues 42–79 (GLQDDEKTAEKPDAVKSLDHNATTGTPPNRTDVGSKAV) is disordered. The span at 61–70 (HNATTGTPPN) shows a compositional bias: polar residues.

The protein belongs to the TatA/E family. The Tat system comprises two distinct complexes: a TatABC complex, containing multiple copies of TatA, TatB and TatC subunits, and a separate TatA complex, containing only TatA subunits. Substrates initially bind to the TatABC complex, which probably triggers association of the separate TatA complex to form the active translocon.

The protein localises to the cell inner membrane. Functionally, part of the twin-arginine translocation (Tat) system that transports large folded proteins containing a characteristic twin-arginine motif in their signal peptide across membranes. TatA could form the protein-conducting channel of the Tat system. The chain is Sec-independent protein translocase protein TatA from Rhodopseudomonas palustris (strain HaA2).